A 51-amino-acid polypeptide reads, in one-letter code: uncharacterized protein (51 aa).

This is an uncharacterized protein from Treponema pallidum (strain Nichols).